Reading from the N-terminus, the 352-residue chain is Holliday junction branch migration complex subunit RuvB (352 aa).

The tract at residues 4–185 is large ATPase domain (RuvB-L); sequence PDRLISAVSG…FGIVQRLEFY (182 aa). Residues Ile-24, Arg-25, Gly-66, Lys-69, Thr-70, Thr-71, 132 to 134, Arg-175, Tyr-185, and Arg-222 contribute to the ATP site; that span reads EDF. Thr-70 is a binding site for Mg(2+). The interval 186–256 is small ATPAse domain (RuvB-S); that stretch reads NVEDLATIVS…IADKALNLLD (71 aa). Positions 259–352 are head domain (RuvB-H); it reads ERGFDHLDRR…SDLFTSEDGN (94 aa). The DNA site is built by Arg-295, Arg-314, and Arg-319.

Belongs to the RuvB family. In terms of assembly, homohexamer. Forms an RuvA(8)-RuvB(12)-Holliday junction (HJ) complex. HJ DNA is sandwiched between 2 RuvA tetramers; dsDNA enters through RuvA and exits via RuvB. An RuvB hexamer assembles on each DNA strand where it exits the tetramer. Each RuvB hexamer is contacted by two RuvA subunits (via domain III) on 2 adjacent RuvB subunits; this complex drives branch migration. In the full resolvosome a probable DNA-RuvA(4)-RuvB(12)-RuvC(2) complex forms which resolves the HJ.

It is found in the cytoplasm. The enzyme catalyses ATP + H2O = ADP + phosphate + H(+). Its function is as follows. The RuvA-RuvB-RuvC complex processes Holliday junction (HJ) DNA during genetic recombination and DNA repair, while the RuvA-RuvB complex plays an important role in the rescue of blocked DNA replication forks via replication fork reversal (RFR). RuvA specifically binds to HJ cruciform DNA, conferring on it an open structure. The RuvB hexamer acts as an ATP-dependent pump, pulling dsDNA into and through the RuvAB complex. RuvB forms 2 homohexamers on either side of HJ DNA bound by 1 or 2 RuvA tetramers; 4 subunits per hexamer contact DNA at a time. Coordinated motions by a converter formed by DNA-disengaged RuvB subunits stimulates ATP hydrolysis and nucleotide exchange. Immobilization of the converter enables RuvB to convert the ATP-contained energy into a lever motion, pulling 2 nucleotides of DNA out of the RuvA tetramer per ATP hydrolyzed, thus driving DNA branch migration. The RuvB motors rotate together with the DNA substrate, which together with the progressing nucleotide cycle form the mechanistic basis for DNA recombination by continuous HJ branch migration. Branch migration allows RuvC to scan DNA until it finds its consensus sequence, where it cleaves and resolves cruciform DNA. The polypeptide is Holliday junction branch migration complex subunit RuvB (Pseudomonas paraeruginosa (strain DSM 24068 / PA7) (Pseudomonas aeruginosa (strain PA7))).